The chain runs to 319 residues: ATP-dependent 6-phosphofructokinase (319 aa).

Glycine 11 provides a ligand contact to ATP. 21–25 (RAVVR) serves as a coordination point for ADP. ATP-binding positions include 72–73 (RY) and 102–105 (GDGS). Mg(2+) is bound at residue aspartate 103. Position 125-127 (125-127 (TID)) interacts with substrate. The active-site Proton acceptor is the aspartate 127. Arginine 154 lines the ADP pocket. Substrate-binding positions include arginine 162 and 169–171 (MGR). ADP is bound by residues 185–187 (GAE), arginine 211, and 213–215 (KKH). Residues glutamate 222, arginine 243, and 249 to 252 (HVQR) contribute to the substrate site.

The protein belongs to the phosphofructokinase type A (PFKA) family. ATP-dependent PFK group I subfamily. Prokaryotic clade 'B1' sub-subfamily. As to quaternary structure, homotetramer. Mg(2+) is required as a cofactor.

The protein localises to the cytoplasm. The enzyme catalyses beta-D-fructose 6-phosphate + ATP = beta-D-fructose 1,6-bisphosphate + ADP + H(+). It functions in the pathway carbohydrate degradation; glycolysis; D-glyceraldehyde 3-phosphate and glycerone phosphate from D-glucose: step 3/4. With respect to regulation, allosterically activated by ADP and other diphosphonucleosides, and allosterically inhibited by phosphoenolpyruvate. Its function is as follows. Catalyzes the phosphorylation of D-fructose 6-phosphate to fructose 1,6-bisphosphate by ATP, the first committing step of glycolysis. This is ATP-dependent 6-phosphofructokinase from Listeria monocytogenes serotype 4a (strain HCC23).